Here is a 378-residue protein sequence, read N- to C-terminus: Ribosomal RNA large subunit methyltransferase G (378 aa).

The protein belongs to the methyltransferase superfamily. RlmG family.

The protein localises to the cytoplasm. It carries out the reaction guanosine(1835) in 23S rRNA + S-adenosyl-L-methionine = N(2)-methylguanosine(1835) in 23S rRNA + S-adenosyl-L-homocysteine + H(+). Specifically methylates the guanine in position 1835 (m2G1835) of 23S rRNA. The sequence is that of Ribosomal RNA large subunit methyltransferase G from Salmonella paratyphi A (strain ATCC 9150 / SARB42).